A 218-amino-acid chain; its full sequence is MATRSPSVVISDDEPGYDLDLFCIPNHYVEDLEKVFIPHGVIMDRTERLARDVMKEMGGHHIVALCVLKGGYKFFADLLDYIKALNRNSDRSIPMTVDFIRLKSYCNDQSTGDIKVIGGDDLSTLTGKNVLIVEDIIDTGKTMQTLLSLVKRYNLKMVKVASLLVKRTSRSVGYRPDFVGFEIPDKFVVGYALDYNEYFRDLNHICVISETGKAKYKA.

Residue Ala-2 is modified to N-acetylalanine. Position 69 (Lys-69) interacts with GMP. Lys-103 bears the N6-acetyllysine mark. A Glycyl lysine isopeptide (Lys-Gly) (interchain with G-Cter in SUMO1); alternate cross-link involves residue Lys-115. Lys-115 is covalently cross-linked (Glycyl lysine isopeptide (Lys-Gly) (interchain with G-Cter in SUMO2); alternate). Residues Glu-134–Thr-142, Lys-166, Lys-186–Val-188, and Asp-194 contribute to the GMP site. Asp-138 functions as the Proton acceptor in the catalytic mechanism. Thr-142 bears the Phosphothreonine mark. Asp-194 contacts Mg(2+).

This sequence belongs to the purine/pyrimidine phosphoribosyltransferase family. As to quaternary structure, homotetramer. Mg(2+) is required as a cofactor.

It localises to the cytoplasm. The enzyme catalyses IMP + diphosphate = hypoxanthine + 5-phospho-alpha-D-ribose 1-diphosphate. The catalysed reaction is GMP + diphosphate = guanine + 5-phospho-alpha-D-ribose 1-diphosphate. Its pathway is purine metabolism; IMP biosynthesis via salvage pathway; IMP from hypoxanthine: step 1/1. Its function is as follows. Converts guanine to guanosine monophosphate, and hypoxanthine to inosine monophosphate. Transfers the 5-phosphoribosyl group from 5-phosphoribosylpyrophosphate onto the purine. Plays a central role in the generation of purine nucleotides through the purine salvage pathway. The polypeptide is Hypoxanthine-guanine phosphoribosyltransferase (HPRT1) (Cricetulus griseus (Chinese hamster)).